The following is a 217-amino-acid chain: Ribose-5-phosphate isomerase A (217 aa).

Substrate contacts are provided by residues 28-31 (TGST), 81-84 (DGAD), and 94-97 (KGGG). Residue glutamate 103 is the Proton acceptor of the active site. Position 121 (lysine 121) interacts with substrate.

The protein belongs to the ribose 5-phosphate isomerase family. As to quaternary structure, homodimer.

It catalyses the reaction aldehydo-D-ribose 5-phosphate = D-ribulose 5-phosphate. It functions in the pathway carbohydrate degradation; pentose phosphate pathway; D-ribose 5-phosphate from D-ribulose 5-phosphate (non-oxidative stage): step 1/1. Catalyzes the reversible conversion of ribose-5-phosphate to ribulose 5-phosphate. This is Ribose-5-phosphate isomerase A from Aeromonas salmonicida (strain A449).